The primary structure comprises 255 residues: Large ribosomal subunit protein uL6m (255 aa).

The segment at 39 to 61 (AARRNFSATTTRPSKLGRTPLSI) is disordered.

The protein belongs to the universal ribosomal protein uL6 family. Component of the mitochondrial large ribosomal subunit (mt-LSU). Mature N.crassa 74S mitochondrial ribosomes consist of a small (37S) and a large (54S) subunit. The 37S small subunit contains a 16S ribosomal RNA (16S mt-rRNA) and 32 different proteins. The 54S large subunit contains a 23S rRNA (23S mt-rRNA) and 42 different proteins.

It is found in the mitochondrion. Its function is as follows. Component of the mitochondrial ribosome (mitoribosome), a dedicated translation machinery responsible for the synthesis of mitochondrial genome-encoded proteins, including at least some of the essential transmembrane subunits of the mitochondrial respiratory chain. The mitoribosomes are attached to the mitochondrial inner membrane and translation products are cotranslationally integrated into the membrane. In Neurospora crassa (strain ATCC 24698 / 74-OR23-1A / CBS 708.71 / DSM 1257 / FGSC 987), this protein is Large ribosomal subunit protein uL6m (mrpl6).